Here is a 53-residue protein sequence, read N- to C-terminus: UPF0391 membrane protein Ent638_0536 (53 aa).

The next 2 helical transmembrane spans lie at 4-24 and 27-47; these read WGII…GGLA and AAWA…VSLF.

Belongs to the UPF0391 family.

It localises to the cell membrane. This chain is UPF0391 membrane protein Ent638_0536, found in Enterobacter sp. (strain 638).